We begin with the raw amino-acid sequence, 162 residues long: Peptide deformylase-like (162 aa).

It belongs to the polypeptide deformylase family.

The polypeptide is Peptide deformylase-like (Staphylococcus epidermidis (strain ATCC 35984 / DSM 28319 / BCRC 17069 / CCUG 31568 / BM 3577 / RP62A)).